Reading from the N-terminus, the 395-residue chain is Peptide-N(4)-(N-acetyl-beta-glucosaminyl)asparagine amidase (395 aa).

C131, C134, C172, and C175 together coordinate Zn(2+). The Nucleophile role is filled by C198. Catalysis depends on residues H232 and D249. E252 provides a ligand contact to substrate. Residues 363–395 (PELTKTTPSTDLPSGRQSGSTEWTKSRGENGES) form a disordered region. Residues 366–385 (TKTTPSTDLPSGRQSGSTEW) are compositionally biased toward polar residues. Over residues 386–395 (TKSRGENGES) the composition is skewed to basic and acidic residues.

The protein belongs to the transglutaminase-like superfamily. PNGase family. Zn(2+) serves as cofactor.

The protein localises to the cytoplasm. It carries out the reaction Hydrolysis of an N(4)-(acetyl-beta-D-glucosaminyl)asparagine residue in which the glucosamine residue may be further glycosylated, to yield a (substituted) N-acetyl-beta-D-glucosaminylamine and a peptide containing an aspartate residue.. Specifically deglycosylates the denatured form of N-linked glycoproteins in the cytoplasm and assists their proteasome-mediated degradation. Cleaves the beta-aspartyl-glucosamine (GlcNAc) of the glycan and the amide side chain of Asn, converting Asn to Asp. Prefers proteins containing high-mannose over those bearing complex type oligosaccharides. Can recognize misfolded proteins in the endoplasmic reticulum that are exported to the cytosol to be destroyed and deglycosylate them, while it has no activity toward native proteins. Deglycosylation is a prerequisite for subsequent proteasome-mediated degradation of some, but not all, misfolded glycoproteins. The sequence is that of Peptide-N(4)-(N-acetyl-beta-glucosaminyl)asparagine amidase (PNG1) from Candida albicans (strain SC5314 / ATCC MYA-2876) (Yeast).